We begin with the raw amino-acid sequence, 191 residues long: Oleosin 20.3 kDa (191 aa).

At alanine 2 the chain carries N-acetylalanine. Residues 2–54 form a polar region; sequence ANVDRDRRVHVDRTDKRVHQPNYEDDVGFGGYGGYGAGSDYKSRGPSTNQILA. 2 consecutive transmembrane segments (helical) span residues 52–72 and 99–119; these read ILAL…AGLT and LTIG…LTGL. The interval 55–128 is hydrophobic; the sequence is LIAGVPIGGT…LSSVSWVLNY (74 aa).

It belongs to the oleosin family.

It localises to the lipid droplet. It is found in the membrane. Functionally, may have a structural role to stabilize the lipid body during desiccation of the seed by preventing coalescence of the oil. Probably interacts with both lipid and phospholipid moieties of lipid bodies. May also provide recognition signals for specific lipase anchorage in lipolysis during seedling growth. The chain is Oleosin 20.3 kDa (OL2) from Arabidopsis thaliana (Mouse-ear cress).